We begin with the raw amino-acid sequence, 1164 residues long: Receptor-like protein kinase BRI1-like 3 (1164 aa).

An N-terminal signal peptide occupies residues 1–23 (MKQQWQFLILCLLVLFLTVDSRG). Over 24 to 772 (RRLLSDDVND…RSHAHPKKQS (749 aa)) the chain is Extracellular. Asn32 carries an N-linked (GlcNAc...) asparagine glycan. The short motif at 65–72 (CTWRGVSC) is the Cys pair 1 element. LRR repeat units lie at residues 77 to 98 (RVIG…NNLT), 102 to 123 (NLRS…SSSG), 125 to 146 (SLEV…DYVF), 151 to 173 (NLVS…PSAS), 176 to 197 (RITT…TFIA), 202 to 224 (SLKH…SFGL), 227 to 248 (NLTV…VSLS), 252 to 274 (LLET…DYWG), 278 to 300 (NLRQ…LSLL), 303 to 325 (TLEV…FTSC), 327 to 347 (SLQS…STVV), 352 to 375 (RITN…TNCS), 376 to 397 (NLRV…GFCS), 403 to 424 (VLEK…ELGK), 427 to 448 (SLKT…EIWT), 451 to 473 (KLSD…ICVD), 476 to 498 (NLET…ISKC), 500 to 523 (NMLW…GKLE), 524 to 546 (KLAI…LGNC), and 548 to 570 (NLIW…LASQ). 2 N-linked (GlcNAc...) asparagine glycosylation sites follow: Asn96 and Asn112. N-linked (GlcNAc...) asparagine glycosylation is present at Asn156. N-linked (GlcNAc...) asparagine glycosylation is found at Asn212, Asn227, and Asn257. 2 N-linked (GlcNAc...) asparagine glycosylation sites follow: Asn362 and Asn373. Residue Asn461 is glycosylated (N-linked (GlcNAc...) asparagine). Residues Asn532, Asn558, and Asn638 are each glycosylated (N-linked (GlcNAc...) asparagine). LRR repeat units lie at residues 640 to 662 (SMIY…YGAM), 664 to 686 (YLQV…FGGL), 688 to 711 (AIGV…GGLS), and 712 to 734 (FLSD…GQLT). N-linked (GlcNAc...) asparagine glycosylation is found at Asn722 and Asn743. Positions 748–755 (CGVPLPPC) match the Cys pair 2 motif. A helical membrane pass occupies residues 773 to 793 (IATGMSAGIVFSFMCIVMLIM). The Cytoplasmic portion of the chain corresponds to 794–1164 (ALYRARKVQK…LVEESRDKEP (371 aa)). Residues Thr847 and Thr855 each carry the phosphothreonine modification. A Protein kinase domain is found at 858-1136 (FSADSMIGSG…QVMTMFKELV (279 aa)). Residues 864–872 (IGSGGFGDV) and Lys886 each bind ATP. Phosphotyrosine is present on Tyr931. Asp985 (proton acceptor) is an active-site residue. Ser1020 is modified (phosphoserine). The residue at position 1028 (Tyr1028) is a Phosphotyrosine.

It belongs to the protein kinase superfamily. Ser/Thr protein kinase family. Post-translationally, autophosphorylated on Tyr and Thr residues. As to expression, predominantly expressed in vascular tissues. Expressed only during postembryonic development with a very discrete pattern of expression, preferentially in the two protophloem cell files at the elongation zone of the root. The expression in these two cell files attenuates as the phloem cells differentiate in the upper root. In cotyledons and leaves, it is expressed in phloem cells, starting at the cotyledons and shoot apex, moving toward the basal part of the leaves, where the expression is weak. Expressed in the secondary and tertiary veins and in the upper part of the cotyledons and leaves. Weakly or not expressed in the inflorescence stems. Has some complementary expression with BRL1.

The protein localises to the cell membrane. It carries out the reaction L-seryl-[protein] + ATP = O-phospho-L-seryl-[protein] + ADP + H(+). The catalysed reaction is L-threonyl-[protein] + ATP = O-phospho-L-threonyl-[protein] + ADP + H(+). It catalyses the reaction L-tyrosyl-[protein] + ATP = O-phospho-L-tyrosyl-[protein] + ADP + H(+). Functionally, receptor with a dual specificity kinase activity acting on both serine/threonine- and tyrosine-containing substrates. Binds brassinolide. Regulates, in response to brassinosteroid binding, a signaling cascade involved in plant development. May be involved in cell growth and vascular differentiation. The sequence is that of Receptor-like protein kinase BRI1-like 3 (BRL3) from Arabidopsis thaliana (Mouse-ear cress).